We begin with the raw amino-acid sequence, 578 residues long: 2-succinyl-5-enolpyruvyl-6-hydroxy-3-cyclohexene-1-carboxylate synthase (578 aa).

A disordered region spans residues 186-208 (LPAAGGEHHPAEPRSTPWDGPVP).

This sequence belongs to the TPP enzyme family. MenD subfamily. In terms of assembly, homodimer. Requires Mg(2+) as cofactor. It depends on Mn(2+) as a cofactor. Thiamine diphosphate serves as cofactor.

The catalysed reaction is isochorismate + 2-oxoglutarate + H(+) = 5-enolpyruvoyl-6-hydroxy-2-succinyl-cyclohex-3-ene-1-carboxylate + CO2. It participates in quinol/quinone metabolism; 1,4-dihydroxy-2-naphthoate biosynthesis; 1,4-dihydroxy-2-naphthoate from chorismate: step 2/7. Its pathway is cofactor biosynthesis; phylloquinone biosynthesis. In terms of biological role, catalyzes the thiamine diphosphate-dependent decarboxylation of 2-oxoglutarate and the subsequent addition of the resulting succinic semialdehyde-thiamine pyrophosphate anion to isochorismate to yield 2-succinyl-5-enolpyruvyl-6-hydroxy-3-cyclohexene-1-carboxylate (SEPHCHC). This chain is 2-succinyl-5-enolpyruvyl-6-hydroxy-3-cyclohexene-1-carboxylate synthase, found in Synechococcus sp. (strain WH7803).